A 537-amino-acid chain; its full sequence is Tegument protein BRRF2 (537 aa).

Disordered regions lie at residues 321-366 (RPRF…AVPP), 378-398 (AKQN…ETSP), 414-466 (SKQH…DEEF), and 486-537 (GLRV…LSVV). A compositionally biased stretch (polar residues) spans 334–347 (EPQQTCSQLTSRGN). Over residues 423–441 (SSQAAPSFSSVAPVASLSG) the composition is skewed to low complexity. Residues 492-517 (DEDEDGSEDGEFSDLDLSDSDHEGDE) show a composition bias toward acidic residues.

The protein belongs to the lymphocryptovirus BRRF2 family.

The protein localises to the virion tegument. This is Tegument protein BRRF2 from Homo sapiens (Human).